The primary structure comprises 190 residues: Cancer-related nucleoside-triphosphatase (190 aa).

At alanine 2 the chain carries N-acetylalanine. ATP is bound by residues 9–16 (GPPGVGKT) and 109–116 (VCVIDEIG). Lysine 165 is modified (N6-acetyllysine).

The protein belongs to the THEP1 NTPase family. As to quaternary structure, monomer.

The enzyme catalyses a ribonucleoside 5'-triphosphate + H2O = a ribonucleoside 5'-diphosphate + phosphate + H(+). It catalyses the reaction 5-methyl-UTP + H2O = 5-methyl-UDP + phosphate + H(+). It carries out the reaction CTP + H2O = CDP + phosphate + H(+). The catalysed reaction is ATP + H2O = ADP + phosphate + H(+). The enzyme catalyses GTP + H2O = GDP + phosphate + H(+). Functionally, has nucleotide phosphatase activity towards ATP, GTP, CTP, TTP and UTP. Hydrolyzes nucleoside diphosphates with lower efficiency. This is Cancer-related nucleoside-triphosphatase from Homo sapiens (Human).